We begin with the raw amino-acid sequence, 427 residues long: MAILLKNGLVYQEGEFIKEDVLISGSKIQAIGLDLPEEGAEVYDLKGKLLAPGLVDIHEHYREPGFTYKETIKTGSEAASRGGFTTVCTMPNVDPIPDDLETFEKQVALNEANSCVHLKQYGAITEDLTSDKVVDMAALKEAGAFAFSNDGHGIQQAGTMYEAMQEAAKVGLAICEHIQDDSLYHHGVMNAGKKAEELGLPGILGVSESAQLARDLVLAQATGVHYHACHVSTKESVELIRIAKEYGINVTAEATPHHLLLSEEEIDGNNGYYKMNPPLRSKEDQFALIEGMLDGTIDLIATDHAPHSREEKAGDMRKAAFGIIGNETAFACLYTKFVKSGQMDLSLLLDLMSYQPAKLFGLDAGVLAPGKEADLAVFDLDHAEKLSEEDYLSKGVNTPFTGQEVYGMTALTFVSGKLVYKSKHFAD.

Zn(2+) is bound by residues histidine 58 and histidine 60. Substrate is bound by residues 60–62 (HYR) and asparagine 92. Zn(2+) is bound by residues aspartate 150, histidine 177, and histidine 230. Asparagine 276 lines the substrate pocket. Aspartate 303 is a Zn(2+) binding site. Residue aspartate 303 is part of the active site. Residues histidine 307 and 321–322 (FG) each bind substrate.

Belongs to the metallo-dependent hydrolases superfamily. DHOase family. Class I DHOase subfamily. Requires Zn(2+) as cofactor.

The catalysed reaction is (S)-dihydroorotate + H2O = N-carbamoyl-L-aspartate + H(+). Its pathway is pyrimidine metabolism; UMP biosynthesis via de novo pathway; (S)-dihydroorotate from bicarbonate: step 3/3. Catalyzes the reversible cyclization of carbamoyl aspartate to dihydroorotate. This Lactobacillus leichmannii protein is Dihydroorotase.